We begin with the raw amino-acid sequence, 130 residues long: Small ribosomal subunit protein uS9 (130 aa).

This sequence belongs to the universal ribosomal protein uS9 family.

This Methylococcus capsulatus (strain ATCC 33009 / NCIMB 11132 / Bath) protein is Small ribosomal subunit protein uS9.